The following is a 167-amino-acid chain: Large ribosomal subunit protein uL10 (167 aa).

The protein belongs to the universal ribosomal protein uL10 family. Part of the ribosomal stalk of the 50S ribosomal subunit. The N-terminus interacts with L11 and the large rRNA to form the base of the stalk. The C-terminus forms an elongated spine to which L12 dimers bind in a sequential fashion forming a multimeric L10(L12)X complex.

Functionally, forms part of the ribosomal stalk, playing a central role in the interaction of the ribosome with GTP-bound translation factors. This chain is Large ribosomal subunit protein uL10, found in Lactiplantibacillus plantarum (strain ATCC BAA-793 / NCIMB 8826 / WCFS1) (Lactobacillus plantarum).